The chain runs to 198 residues: Large ribosomal subunit protein uL24c (198 aa).

A chloroplast-targeting transit peptide spans 1-50 (MATMSALQSSFTSLSLSPSSSFLGQRLISPISLSVTSPVKPAENPCLVLA).

Belongs to the universal ribosomal protein uL24 family. As to quaternary structure, part of the 50S ribosomal subunit.

Its subcellular location is the plastid. The protein resides in the chloroplast. One of two assembly initiator proteins, it binds directly to the 5'-end of the 23S rRNA, where it nucleates assembly of the 50S subunit. Required for optimal plastid performance in terms of photosynthesis and growth. Required for the translation of plastid mRNAs. Plays a critical role in biosynthesis of thylakoid membrane proteins encoded by chloroplast genes. The chain is Large ribosomal subunit protein uL24c (RPL24) from Arabidopsis thaliana (Mouse-ear cress).